Here is a 276-residue protein sequence, read N- to C-terminus: Natural cytotoxicity triggering receptor 2 (276 aa).

Positions 1 to 21 are cleaved as a signal peptide; the sequence is MAWRALHPLLLLLLLFPGSQA. Residues 22–120 form the Ig-like domain; it reads QSKAQVLQSV…IYRPSDNSVS (99 aa). Residues 22-192 lie on the Extracellular side of the membrane; that stretch reads QSKAQVLQSV…LRPGPAAPIA (171 aa). 2 disulfide bridges follow: Cys40–Cys109 and Cys55–Cys63. Composition is skewed to polar residues over residues 138-156 and 167-183; these read TSWT…QSCV and ESPS…NSTL. Residues 138–184 are disordered; it reads TSWTPRDLVSSQTQTQSCVPPTAGARQAPESPSTIPVPSQPQNSTLR. N-linked (GlcNAc...) asparagine glycosylation is present at Asn180. The helical transmembrane segment at 193 to 213 threads the bilayer; it reads LVPVFCGLLVAKSLVLSALLV. The Cytoplasmic portion of the chain corresponds to 214–276; the sequence is WWGDIWWKTM…ISDDDDEHTL (63 aa).

This sequence belongs to the natural cytotoxicity receptor (NCR) family. As to quaternary structure, interacts with TYROBP/DAP12. Interacts with KMT2E isoform NKp44L. Selectively expressed by activated NK cells and by in vitro cultured (i.e. activated) TCRg/d lymphoid cells.

The protein localises to the cell membrane. Cytotoxicity-activating receptor that may contribute to the increased efficiency of activated natural killer (NK) cells to mediate tumor cell lysis. The polypeptide is Natural cytotoxicity triggering receptor 2 (NCR2) (Homo sapiens (Human)).